The sequence spans 200 residues: Elongation factor Ts (200 aa).

The involved in Mg(2+) ion dislocation from EF-Tu stretch occupies residues 81–84; it reads TDFV.

It belongs to the EF-Ts family.

Its subcellular location is the cytoplasm. Associates with the EF-Tu.GDP complex and induces the exchange of GDP to GTP. It remains bound to the aminoacyl-tRNA.EF-Tu.GTP complex up to the GTP hydrolysis stage on the ribosome. This is Elongation factor Ts from Nitratidesulfovibrio vulgaris (strain DSM 19637 / Miyazaki F) (Desulfovibrio vulgaris).